The following is a 383-amino-acid chain: Serine protease 23 (383 aa).

The signal sequence occupies residues 1–19; sequence MAGIPGLLFLLFLLLCAVG. Asparagine 93 is a glycosylation site (N-linked (GlcNAc...) asparagine). Residues 108–127 form a disordered region; that stretch reads SSGGGAQHRDSGSSGKSRRK. Serine 109 bears the Phosphoserine; by FAM20C mark. Cysteines 160 and 176 form a disulfide. Catalysis depends on histidine 175, which acts as the Charge relay system. Asparagine 207 carries an N-linked (GlcNAc...) asparagine glycan. Active-site charge relay system residues include aspartate 240 and serine 316.

It belongs to the peptidase S1 family.

The protein localises to the secreted. The protein is Serine protease 23 (PRSS23) of Macaca mulatta (Rhesus macaque).